The following is a 380-amino-acid chain: Beta sliding clamp (380 aa).

The protein belongs to the beta sliding clamp family. Forms a ring-shaped head-to-tail homodimer around DNA which binds and tethers DNA polymerases and other proteins to the DNA. The DNA replisome complex has a single clamp-loading complex (3 tau and 1 each of delta, delta', psi and chi subunits) which binds 3 Pol III cores (1 core on the leading strand and 2 on the lagging strand) each with a beta sliding clamp dimer. Additional proteins in the replisome are other copies of gamma, psi and chi, Ssb, DNA helicase and RNA primase.

It localises to the cytoplasm. Confers DNA tethering and processivity to DNA polymerases and other proteins. Acts as a clamp, forming a ring around DNA (a reaction catalyzed by the clamp-loading complex) which diffuses in an ATP-independent manner freely and bidirectionally along dsDNA. Initially characterized for its ability to contact the catalytic subunit of DNA polymerase III (Pol III), a complex, multichain enzyme responsible for most of the replicative synthesis in bacteria; Pol III exhibits 3'-5' exonuclease proofreading activity. The beta chain is required for initiation of replication as well as for processivity of DNA replication. The chain is Beta sliding clamp (dnaN) from Halalkalibacterium halodurans (strain ATCC BAA-125 / DSM 18197 / FERM 7344 / JCM 9153 / C-125) (Bacillus halodurans).